Here is a 213-residue protein sequence, read N- to C-terminus: Immunoglobulin lambda-like polypeptide 1 (213 aa).

An N-terminal signal peptide occupies residues 1–37 (MRPGTGQGGLEAPGEPGPNLRQRWPLLLLGLAVVTHG). The tract at residues 97–108 (VFGSGTQLTVLS) is j region. A c region region spans residues 109–213 (QPKATPSVTL…EKTVAPAECS (105 aa)). The 95-residue stretch at 114–208 (PSVTLFPPSS…EGSTVEKTVA (95 aa)) folds into the Ig-like C1-type domain. A disulfide bridge connects residues C135 and C194.

As to quaternary structure, associates non-covalently with VPREB1. Interacts with SYNV1/HRD1 (via N-terminus); this interaction leads to increased IGLL1 ubiquitination and degradation in pre-B cells, possibly through a lysosomal, not proteasomal, pathway. In terms of tissue distribution, expressed only in pre-B-cells and a special B-cell line (which is surface Ig negative).

It localises to the endoplasmic reticulum. It is found in the secreted. In terms of biological role, critical for B-cell development. This is Immunoglobulin lambda-like polypeptide 1 (IGLL1) from Homo sapiens (Human).